The following is a 352-amino-acid chain: Probable transcription factor At1g11510 (352 aa).

Disordered stretches follow at residues 1–132 and 239–269; these read MSRR…GGEE and MKSN…KNNC. Residues 56–66 show a composition bias toward acidic residues; that stretch reads SGSDEETDSDS. 3 stretches are compositionally biased toward basic and acidic residues: residues 89–101, 117–132, and 241–259; these read KTSE…RSLE, VSGE…GGEE, and SNEK…HELD.

It belongs to the GeBP family.

In Arabidopsis thaliana (Mouse-ear cress), this protein is Probable transcription factor At1g11510.